We begin with the raw amino-acid sequence, 611 residues long: Leukotriene A-4 hydrolase (611 aa).

Lys-73 carries the N6-acetyllysine modification. Residues 135 to 137 and 267 to 272 contribute to the a peptide site; these read QCQ and PYGGME. His-296 serves as a coordination point for Zn(2+). Glu-297 (proton acceptor) is an active-site residue. Zn(2+) contacts are provided by His-300 and Glu-319. Lys-337 carries the N6-acetyllysine modification. Tyr-384 serves as the catalytic Proton donor. N6-acetyllysine is present on Lys-414. A Phosphoserine modification is found at Ser-416. Residue 564–566 coordinates a peptide; the sequence is RMK. Residue Lys-573 is modified to N6-acetyllysine.

Belongs to the peptidase M1 family. In terms of assembly, monomer. Zn(2+) serves as cofactor. In terms of processing, phosphorylation at Ser-416 inhibits leukotriene-A4 hydrolase activity.

It localises to the cytoplasm. The catalysed reaction is leukotriene A4 + H2O = leukotriene B4. The enzyme catalyses (5S,6S)-epoxy-(18R)-hydroxy-(7E,9E,11Z,14Z,16E)-eicosapentaenoate + H2O = resolvin E1. It catalyses the reaction (5S,6S)-epoxy-(18S)-hydroxy-(7E,9E,11Z,14Z,16E)-eicosapentaenoate + H2O = 18S-resolvin E1. It carries out the reaction Release of the N-terminal residue from a tripeptide.. It participates in lipid metabolism; leukotriene B4 biosynthesis. Its activity is regulated as follows. Inhibited by bestatin. Inhibited by captopril. The epoxide hydrolase activity is restrained by suicide inactivation that involves binding of LTA4 to Tyr-379. 4-(4-benzylphenyl)thiazol-2-amine (ARM1) selectively inhibits the epoxide hydrolase activity. In terms of biological role, bifunctional zinc metalloenzyme that comprises both epoxide hydrolase (EH) and aminopeptidase activities. Acts as an epoxide hydrolase to catalyze the conversion of LTA4 to the pro-inflammatory mediator leukotriene B4 (LTB4). Also has aminopeptidase activity, with high affinity for N-terminal arginines of various synthetic tripeptides. In addition to its pro-inflammatory EH activity, may also counteract inflammation by its aminopeptidase activity, which inactivates by cleavage another neutrophil attractant, the tripeptide Pro-Gly-Pro (PGP), a bioactive fragment of collagen generated by the action of matrix metalloproteinase-9 (MMP9) and prolylendopeptidase (PREPL). Involved also in the biosynthesis of resolvin E1 and 18S-resolvin E1 from eicosapentaenoic acid, two lipid mediators that show potent anti-inflammatory and pro-resolving actions. In Rattus norvegicus (Rat), this protein is Leukotriene A-4 hydrolase (Lta4h).